The sequence spans 238 residues: Opacity protein opA68 (238 aa).

Ala-1 is a signal peptide. Residues 88–109 are disordered; the sequence is NLQRRTSNGNRRDRKTENQENG.

The protein belongs to the opacity porin family.

The protein resides in the cell outer membrane. Functionally, implicated in a number of adherence functions. OPA proteins are implicated in pathogenesis and are subject to phase variation. The chain is Opacity protein opA68 from Neisseria gonorrhoeae.